The primary structure comprises 122 residues: Large ribosomal subunit protein bL12 (122 aa).

The protein belongs to the bacterial ribosomal protein bL12 family. As to quaternary structure, homodimer. Part of the ribosomal stalk of the 50S ribosomal subunit. Forms a multimeric L10(L12)X complex, where L10 forms an elongated spine to which 2 to 4 L12 dimers bind in a sequential fashion. Binds GTP-bound translation factors.

In terms of biological role, forms part of the ribosomal stalk which helps the ribosome interact with GTP-bound translation factors. Is thus essential for accurate translation. This chain is Large ribosomal subunit protein bL12, found in Shewanella denitrificans (strain OS217 / ATCC BAA-1090 / DSM 15013).